A 339-amino-acid polypeptide reads, in one-letter code: Homocysteine S-methyltransferase 2 (339 aa).

The Hcy-binding domain maps to 12–326; the sequence is AVRRWVDAAG…NTIRAIHRTL (315 aa). 3 residues coordinate Zn(2+): Cys-244, Cys-311, and Cys-312.

Monomer. Zn(2+) serves as cofactor.

It carries out the reaction S-methyl-L-methionine + L-homocysteine = 2 L-methionine + H(+). In terms of biological role, catalyzes methyl transfer from S-methylmethionine (SMM) to adenosyl-L-homocysteine (AdoMet). SMM degradation (by HMT-1, HMT-2, HMT-3 and HMT-4) and biosynthesis (by MMT1) constitute the SMM cycle in plants, which is probably required to achieve short term control of AdoMet level. The sequence is that of Homocysteine S-methyltransferase 2 (HMT-2) from Zea mays (Maize).